We begin with the raw amino-acid sequence, 353 residues long: Cyclin-dependent kinase-like 1 (353 aa).

In terms of domain architecture, Protein kinase spans 4-286 (YDRLSKLGEG…CSELMLHGIF (283 aa)). Residues 10 to 18 (LGEGSYGVV) and lysine 33 each bind ATP. Aspartate 126 serves as the catalytic Proton acceptor. Positions 331–353 (GGNHGNNNNNGNGINRNFLPTIS) are disordered. The span at 335 to 347 (GNNNNNGNGINRN) shows a compositional bias: low complexity.

The protein belongs to the protein kinase superfamily. Ser/Thr protein kinase family. As to expression, specifically expressed in head and tail ciliated sensory neurons.

The protein localises to the cell projection. Its subcellular location is the cilium. The catalysed reaction is L-seryl-[protein] + ATP = O-phospho-L-seryl-[protein] + ADP + H(+). The enzyme catalyses L-threonyl-[protein] + ATP = O-phospho-L-threonyl-[protein] + ADP + H(+). Its function is as follows. Modulates cilium assembly. The polypeptide is Cyclin-dependent kinase-like 1 (Caenorhabditis elegans).